A 274-amino-acid chain; its full sequence is Mitochondrial outer membrane protein porin 1 (274 aa).

This sequence belongs to the eukaryotic mitochondrial porin (TC 1.B.8.1) family. Expressed in shoots and roots. Also expressed in callus, leaves, panicles, sheaths and stems.

It localises to the mitochondrion outer membrane. In terms of biological role, forms a channel through the mitochondrial outer membrane that allows diffusion of small hydrophilic molecules. The channel adopts an open conformation at low or zero membrane potential and a closed conformation at potentials above 30-40 mV. The open state has a weak anion selectivity whereas the closed state is cation-selective. This is Mitochondrial outer membrane protein porin 1 (VDAC1) from Oryza sativa subsp. japonica (Rice).